The chain runs to 325 residues: tRNA U34 carboxymethyltransferase (325 aa).

Carboxy-S-adenosyl-L-methionine-binding positions include lysine 91, tryptophan 105, lysine 110, glycine 130, 152–154 (DPS), methionine 196, tyrosine 200, and arginine 315.

It belongs to the class I-like SAM-binding methyltransferase superfamily. CmoB family. As to quaternary structure, homotetramer.

The enzyme catalyses carboxy-S-adenosyl-L-methionine + 5-hydroxyuridine(34) in tRNA = 5-carboxymethoxyuridine(34) in tRNA + S-adenosyl-L-homocysteine + H(+). Its function is as follows. Catalyzes carboxymethyl transfer from carboxy-S-adenosyl-L-methionine (Cx-SAM) to 5-hydroxyuridine (ho5U) to form 5-carboxymethoxyuridine (cmo5U) at position 34 in tRNAs. The protein is tRNA U34 carboxymethyltransferase of Aeromonas salmonicida (strain A449).